The chain runs to 300 residues: Phosphatidylserine decarboxylase proenzyme (300 aa).

Catalysis depends on charge relay system; for autoendoproteolytic cleavage activity residues aspartate 113, histidine 169, and serine 256. Serine 256 (schiff-base intermediate with substrate; via pyruvic acid; for decarboxylase activity) is an active-site residue. Serine 256 is modified (pyruvic acid (Ser); by autocatalysis).

This sequence belongs to the phosphatidylserine decarboxylase family. PSD-B subfamily. Prokaryotic type II sub-subfamily. As to quaternary structure, heterodimer of a large membrane-associated beta subunit and a small pyruvoyl-containing alpha subunit. The cofactor is pyruvate. In terms of processing, is synthesized initially as an inactive proenzyme. Formation of the active enzyme involves a self-maturation process in which the active site pyruvoyl group is generated from an internal serine residue via an autocatalytic post-translational modification. Two non-identical subunits are generated from the proenzyme in this reaction, and the pyruvate is formed at the N-terminus of the alpha chain, which is derived from the carboxyl end of the proenzyme. The autoendoproteolytic cleavage occurs by a canonical serine protease mechanism, in which the side chain hydroxyl group of the serine supplies its oxygen atom to form the C-terminus of the beta chain, while the remainder of the serine residue undergoes an oxidative deamination to produce ammonia and the pyruvoyl prosthetic group on the alpha chain. During this reaction, the Ser that is part of the protease active site of the proenzyme becomes the pyruvoyl prosthetic group, which constitutes an essential element of the active site of the mature decarboxylase.

The protein localises to the cell membrane. It carries out the reaction a 1,2-diacyl-sn-glycero-3-phospho-L-serine + H(+) = a 1,2-diacyl-sn-glycero-3-phosphoethanolamine + CO2. Its pathway is phospholipid metabolism; phosphatidylethanolamine biosynthesis; phosphatidylethanolamine from CDP-diacylglycerol: step 2/2. Its function is as follows. Catalyzes the formation of phosphatidylethanolamine (PtdEtn) from phosphatidylserine (PtdSer). The polypeptide is Phosphatidylserine decarboxylase proenzyme (Ruminiclostridium cellulolyticum (strain ATCC 35319 / DSM 5812 / JCM 6584 / H10) (Clostridium cellulolyticum)).